Here is a 910-residue protein sequence, read N- to C-terminus: Staphylococcal nuclease domain-containing protein 1 (910 aa).

An N-acetylalanine modification is found at A2. TNase-like domains lie at 18-166 (TVQR…MWSE), 193-328 (KPVN…IWRD), and 341-496 (KQFV…LHSK). Phosphothreonine is present on T103. K193 is modified (N6-acetyllysine). A phosphothreonine mark is found at T235 and T240. 2 consecutive short sequence motifs (nuclear localization signal) follow at residues 321–325 (RRLRI) and 388–392 (KKLRP). S426 bears the Phosphoserine mark. Residue K513 forms a Glycyl lysine isopeptide (Lys-Gly) (interchain with G-Cter in SUMO2) linkage. The TNase-like 4 domain occupies 525 to 660 (GRSEAVVEYV…KQRKEKVWAH (136 aa)). K641 is modified (N6-acetyllysine). S645 carries the phosphoserine modification. Residues 729–787 (APRRGEFCIAKFVDGEWYRARVEKVESPAKVHVFYIDYGNREILPSTRLGTLPPAFSTR) form the Tudor domain. T779 carries the post-translational modification Phosphothreonine. A phosphoserine mark is found at S785 and S909.

Forms a ternary complex with STAT6 and POLR2A. Associates with the RNA-induced silencing complex (RISC). Interacts with the RISC components AGO2, FMR1 and TNRC6A. Interacts with GTF2E1 and GTF2E2. Interacts with PIM1. Interacts with STAT5. Interacts with SYT11 (via C2 2 domain); the interaction with SYT11 is direct. Phosphorylated by PIM1 in vitro.

The protein localises to the cytoplasm. It localises to the nucleus. The protein resides in the melanosome. It carries out the reaction Endonucleolytic cleavage to nucleoside 3'-phosphates and 3'-phosphooligonucleotide end-products.. In terms of biological role, endonuclease that mediates miRNA decay of both protein-free and AGO2-loaded miRNAs. As part of its function in miRNA decay, regulates mRNAs involved in G1-to-S phase transition. Functions as a bridging factor between STAT6 and the basal transcription factor. Plays a role in PIM1 regulation of MYB activity. Functions as a transcriptional coactivator for STAT5. This chain is Staphylococcal nuclease domain-containing protein 1 (Snd1), found in Mus musculus (Mouse).